A 239-amino-acid chain; its full sequence is DNA repair protein RecO (239 aa).

It belongs to the RecO family.

Involved in DNA repair and RecF pathway recombination. The protein is DNA repair protein RecO of Aromatoleum aromaticum (strain DSM 19018 / LMG 30748 / EbN1) (Azoarcus sp. (strain EbN1)).